Reading from the N-terminus, the 380-residue chain is MYLRFLHLWHFRNYRDQKISFEAPKTILVGENAQGKTNLLEAVELLATLRSRRAGRDRELVQQGAEKARIAATVERLGVAHELAMELRSQGGRSLRVNGQGLRRQSDFLGQVSAVVFSSLDLELVRGAPEARRTWLDGVLLQLEPAYLGLVEQYRQILKQRNALLKQDPLAAGDKVPQMAFWDAQLATLGSRILRRRARLLQRLEPLAARWHQAISGGRETLSLTYRPQVPLPDPQADPKVVQAQFLAAIRAKAAAEQALGTSLVGPHRDEVELGIDGVAARAYGSQGQQRTLVLALKLAELELIEQVKGDPPLLLLDDVLAELDLHRQNQLLEAIQERVQTLVTTTHLGSFDAAWLQGAQILQVHQGQIAPSPASLPLA.

30 to 37 (GENAQGKT) serves as a coordination point for ATP.

It belongs to the RecF family.

The protein localises to the cytoplasm. The RecF protein is involved in DNA metabolism; it is required for DNA replication and normal SOS inducibility. RecF binds preferentially to single-stranded, linear DNA. It also seems to bind ATP. This Synechococcus sp. (strain JA-3-3Ab) (Cyanobacteria bacterium Yellowstone A-Prime) protein is DNA replication and repair protein RecF.